The chain runs to 486 residues: Carboxypeptidase Y homolog ARB_07161 (486 aa).

A signal peptide spans 1–17; that stretch reads MKGLLSLLLVGAANALA. N-linked (GlcNAc...) asparagine glycosylation occurs at Asn111. Ser241 is an active-site residue. Disulfide bonds link Cys281–Cys305, Cys288–Cys298, and Cys327–Cys334. Asp403 is an active-site residue. Cys406 provides a ligand contact to substrate. An N-linked (GlcNAc...) asparagine glycan is attached at Asn430. His462 is an active-site residue.

It belongs to the peptidase S10 family.

Its subcellular location is the secreted. It carries out the reaction Release of a C-terminal amino acid with broad specificity.. Functionally, involved in degradation of small peptides. This chain is Carboxypeptidase Y homolog ARB_07161, found in Arthroderma benhamiae (strain ATCC MYA-4681 / CBS 112371) (Trichophyton mentagrophytes).